A 476-amino-acid chain; its full sequence is RuvB-like helicase 2 (476 aa).

An ATP-binding site is contributed by 72-80 (VGPPSTGKT).

It belongs to the RuvB family. In terms of assembly, may form heterododecamers with RVB1. Component of the SWR1 chromatin remodeling complex, the INO80 chromatin remodeling complex, and of the R2TP complex.

It localises to the nucleus. It catalyses the reaction ATP + H2O = ADP + phosphate + H(+). Functionally, DNA helicase which participates in several chromatin remodeling complexes, including the SWR1 and the INO80 complexes. The SWR1 complex mediates the ATP-dependent exchange of histone H2A for the H2A variant HZT1 leading to transcriptional regulation of selected genes by chromatin remodeling. The INO80 complex remodels chromatin by shifting nucleosomes and is involved in DNA repair. Also involved in pre-rRNA processing. The sequence is that of RuvB-like helicase 2 (RVB2) from Mycosarcoma maydis (Corn smut fungus).